A 180-amino-acid chain; its full sequence is tRNA (cytidine(56)-2'-O)-methyltransferase (180 aa).

Residues leucine 85, 114-118, and 132-139 each bind S-adenosyl-L-methionine; these read GAEKV and VGNQPHSE.

The protein belongs to the aTrm56 family. Homodimer.

The protein resides in the cytoplasm. It carries out the reaction cytidine(56) in tRNA + S-adenosyl-L-methionine = 2'-O-methylcytidine(56) in tRNA + S-adenosyl-L-homocysteine + H(+). Its function is as follows. Specifically catalyzes the AdoMet-dependent 2'-O-ribose methylation of cytidine at position 56 in tRNAs. The chain is tRNA (cytidine(56)-2'-O)-methyltransferase from Thermococcus kodakarensis (strain ATCC BAA-918 / JCM 12380 / KOD1) (Pyrococcus kodakaraensis (strain KOD1)).